The sequence spans 85 residues: Conotoxin Vx15a (85 aa).

Positions 1-23 (MEKLTVLILVATVLLTIQVLAQS) are cleaved as a signal peptide. A propeptide spanning residues 24–49 (DGDKHLMKRSKQYATKRLSALMRGHR) is cleaved from the precursor. Pyrrolidone carboxylic acid is present on Q50.

The protein belongs to the conotoxin O2 superfamily. Post-translationally, contains 4 disulfide bonds. Expressed by the venom duct.

The protein localises to the secreted. This Conus vexillum (Flag cone) protein is Conotoxin Vx15a.